We begin with the raw amino-acid sequence, 333 residues long: Homeobox protein Hox-A1 (333 aa).

A disordered region spans residues 61 to 82 (ITSPHHHHHHHHHPQPATYQTS). Positions 64–74 (PHHHHHHHHHP) are enriched in basic residues. An interaction with OGT region spans residues 74-202 (PQPATYQTSG…PASETSSPAQ (129 aa)). A glycan (O-linked (GlcNAc) threonine) is linked at Thr-152. Residues 203–208 (TFDWMK) carry the Antp-type hexapeptide motif. Residues 227–286 (QPNAVRTNFTTKQLTELEKEFHFNKYLTRARSEIAASLQLNETQVKIWFQNRRMKQKKRE) constitute a DNA-binding region (homeobox). The tract at residues 279–333 (RMKQKKREKEGLLPMSPATPPGSDEKTEESSEKSSSSPSAPSPASSTSDTLTTSH) is disordered. Residues 301 to 310 (SDEKTEESSE) are compositionally biased toward basic and acidic residues. Residues 311–333 (KSSSSPSAPSPASSTSDTLTTSH) are compositionally biased toward low complexity.

It belongs to the Antp homeobox family. Labial subfamily. In terms of assembly, interacts with OGT (via TPR repeats domain); the interaction takes place mainly in the nucleus. Forms a DNA-binding heterodimer with transcription factor PBX1. In terms of processing, glycosylated by OGT.

It localises to the nucleus. In terms of biological role, sequence-specific transcription factor. Regulates multiple developmental processes including brainstem, inner and outer ear, abducens nerve and cardiovascular development and morphogenesis as well as cognition and behavior. Also part of a developmental regulatory system that provides cells with specific positional identities on the anterior-posterior axis. Acts on the anterior body structures. Seems to act in the maintenance and/or generation of hindbrain segments. Activates transcription in the presence of PBX1A and PKNOX1. The chain is Homeobox protein Hox-A1 (Hoxa1) from Rattus norvegicus (Rat).